The chain runs to 66 residues: Large ribosomal subunit protein uL30 (66 aa).

The protein belongs to the universal ribosomal protein uL30 family. Part of the 50S ribosomal subunit.

This chain is Large ribosomal subunit protein uL30, found in Azorhizobium caulinodans (strain ATCC 43989 / DSM 5975 / JCM 20966 / LMG 6465 / NBRC 14845 / NCIMB 13405 / ORS 571).